Here is a 233-residue protein sequence, read N- to C-terminus: KREAEANRTPEQQIYDPYKYVETVFVVDKAMVTKYNGDLDKIKTRMYEAANNMNEMYRYMFFRVVMVGLIIWTEEDKITVKPDVDYTLNAFAEWRKTYLLAEKKHDNAQLITGIDFRGSIIGYAYIGSMCHPKRSVGIIQDYSPINLVLAVIMAHEMGHNLGIHHDDGYCYCGGYPCIMGPSISPEPSKFFSNCSYIQCWDFIMNHNPECIDNEPLGTDIISPPLCGNELLEA.

The Peptidase M12B domain maps to 19–215; it reads KYVETVFVVD…HNPECIDNEP (197 aa). Positions 22 and 106 each coordinate Ca(2+). 3 disulfide bridges follow: Cys-130–Cys-210, Cys-170–Cys-194, and Cys-172–Cys-177. Residue His-155 participates in Zn(2+) binding. The active site involves Glu-156. His-159 and His-165 together coordinate Zn(2+). An N-linked (GlcNAc...) asparagine glycan is attached at Asn-193. Residues Cys-210, Asn-213, Asn-228, Leu-230, and Glu-232 each contribute to the Ca(2+) site.

Belongs to the venom metalloproteinase (M12B) family. P-III subfamily. Requires Zn(2+) as cofactor. As to expression, expressed by the venom gland.

The protein resides in the secreted. With respect to regulation, inhibited by PMSF and EDTA. Slightly inhibited by Cu(2+) and Zn(2+). Not inhibited by aprotinin, SBTI, Ca(2+), Mg(2+), Na(+) and K(+). Snake venom zinc metalloprotease that acts at several levels. It has direct fibrino(geno)lytic activity (Aalpha chain of fibrinogen is cleaved quickly, Bbeta chain slowly, and gamma chain even more slowly) and degradation of TNF-alpha. These activities permit to protect against sepsis and disseminated intravascular coagulation. It inhibits ADP-induced platelet aggregation in human platelet-rich plasma (IC(50)=65.4 ug/ml). It decreases the activity of complement by degrading human C5, C6 and C9 in vitro, decreasing serum levels of C1q, C3 and C4 in rat, and inhibiting the MAC deposition on HUVECs membrane. This inhibition of complement protects against hyperacute rejection that is the main barrier in xenotransplantation. Has preference for Lys at the P1 position. Cleaves insulin B chain at '36-Val-|-Glu-37', '39-Leu-|-Tyr-40', and '48-Phe-|-Phe-49' bonds. Also cleaves fibronectin and type IV collagen. This Deinagkistrodon acutus (Hundred-pace snake) protein is Zinc metalloproteinase recombinant fibrinogenase II.